The chain runs to 449 residues: L-lysine-epsilon aminotransferase (449 aa).

Positions 128 and 129 each coordinate pyridoxal 5'-phosphate. 2-oxoglutarate-binding residues include R170 and Q274. Residue R170 participates in L-lysine binding. Residue Q274 coordinates pyridoxal 5'-phosphate. The residue at position 300 (K300) is an N6-(pyridoxal phosphate)lysine. A 2-oxoglutarate-binding site is contributed by R422.

This sequence belongs to the class-III pyridoxal-phosphate-dependent aminotransferase family. The cofactor is pyridoxal 5'-phosphate.

It carries out the reaction L-lysine + 2-oxoglutarate = (S)-2-amino-6-oxohexanoate + L-glutamate. Catalyzes the transfer of the terminal amino group of L-lysine to alpha-ketoglutarate to yield L-glutamate and 2-aminoadipate 6-semialdehyde ((S)-2-amino-6-oxohexanoate), which is spontaneously converted to the dehydrated form 1-piperideine 6-carboxylate. This chain is L-lysine-epsilon aminotransferase, found in Mycobacterium bovis (strain ATCC BAA-935 / AF2122/97).